Reading from the N-terminus, the 148-residue chain is Large ribosomal subunit protein bL9 (148 aa).

It belongs to the bacterial ribosomal protein bL9 family.

Functionally, binds to the 23S rRNA. The chain is Large ribosomal subunit protein bL9 from Listeria innocua serovar 6a (strain ATCC BAA-680 / CLIP 11262).